The sequence spans 461 residues: NADH-ubiquinone oxidoreductase chain 4 (461 aa).

Helical transmembrane passes span 20–42 (PAWLWPTMTTNSLLVATISLTWL), 61–81 (PLSTPLLILTCWLLPLMILAS), 93–113 (QRSFISLLISLQTFLIMAFGA), 114–134 (TEIILFYIMFEATLIPTLIII), 147–167 (GTYFLFYTVMGSLPLLVALLM), 197–217 (WTACLLAFLVKMPLYGVHLWL), 225–245 (PIAGSMVLAAVLLKLGGYGMM), 258–278 (LAYPFIILALWGIIMTGSICL), 285–304 (SLIAYSSVGHMGLVAAGILT), 309–331 (GFTGATVLMIAHGLTSSALFCLA), 351–371 (VILPLMTFWWLMMNLANLALP), 393–413 (TLTMTGLGMLITAIYSLHMFL), and 436–456 (LLMTMHALPMLLLILKPELIW).

This sequence belongs to the complex I subunit 4 family.

The protein localises to the mitochondrion membrane. It catalyses the reaction a ubiquinone + NADH + 5 H(+)(in) = a ubiquinol + NAD(+) + 4 H(+)(out). Its function is as follows. Core subunit of the mitochondrial membrane respiratory chain NADH dehydrogenase (Complex I) that is believed to belong to the minimal assembly required for catalysis. Complex I functions in the transfer of electrons from NADH to the respiratory chain. The immediate electron acceptor for the enzyme is believed to be ubiquinone. This chain is NADH-ubiquinone oxidoreductase chain 4 (MT-ND4), found in Latimeria chalumnae (Coelacanth).